A 209-amino-acid polypeptide reads, in one-letter code: Superoxide dismutase [Mn/Fe] (209 aa).

Fe(3+) contacts are provided by His-38, His-90, Asp-172, and His-176. Residues His-38, His-90, Asp-172, and His-176 each contribute to the Mn(2+) site.

This sequence belongs to the iron/manganese superoxide dismutase family. Requires Mn(2+) as cofactor. Fe(3+) is required as a cofactor.

It catalyses the reaction 2 superoxide + 2 H(+) = H2O2 + O2. In terms of biological role, destroys superoxide anion radicals which are normally produced within the cells and which are toxic to biological systems. Catalyzes the dismutation of superoxide anion radicals into O2 and H2O2 by successive reduction and oxidation of the transition metal ion at the active site. The protein is Superoxide dismutase [Mn/Fe] (sodB) of Rickettsia typhi (strain ATCC VR-144 / Wilmington).